Here is a 508-residue protein sequence, read N- to C-terminus: MEFSSRAAELTTLLESRMTNFYTNFQVDEIGRVVSVGDGIARVYGLNEIQAGEMVEFASGVKGIALNLENENVGIVVFGSDTAIKEGDLVKRTGSIVDVPAGKAMLGRVVDALGVPIDGRGALSDHERRRVEVKAPGIIERKSVHEPMQTGLKAVDSLVPIGRGQRELIIGDRQTGKTAIAIDTILNQKQMNSRATSESETLYCVYVAIGQKRSTVAQLVQILSEANALEYSILVAATASDPAPLQFLAPYSGCAMGEYFRDNGMHALIIYDDLSKQAVAYRQMSLLLRRPPGREAFPGDVFYLHSRLLERAAKRSDQTGAGSLTALPVIETQAGDVSAYIPTNVISITDGQICLETELFYRGIRPAINVGLSVSRVGSAAQLKAMKQACGSLKLELAQYREVAAFAQFGSDLDAATQALLNRGARLTEVLKQPQYAPLPIEKQILVIYAAVNGFCDRMPLDKIPQYERDILTTIKPELLQSLKGGLTSERKIELEKFLKEKAKNYTL.

171-178 (GDRQTGKT) is a binding site for ATP.

It belongs to the ATPase alpha/beta chains family. F-type ATPases have 2 components, CF(1) - the catalytic core - and CF(0) - the membrane proton channel. CF(1) has five subunits: alpha(3), beta(3), gamma(1), delta(1), epsilon(1). CF(0) has three main subunits: a, b and c.

It localises to the mitochondrion. The protein resides in the mitochondrion inner membrane. Mitochondrial membrane ATP synthase (F(1)F(0) ATP synthase or Complex V) produces ATP from ADP in the presence of a proton gradient across the membrane which is generated by electron transport complexes of the respiratory chain. F-type ATPases consist of two structural domains, F(1) - containing the extramembraneous catalytic core, and F(0) - containing the membrane proton channel, linked together by a central stalk and a peripheral stalk. During catalysis, ATP synthesis in the catalytic domain of F(1) is coupled via a rotary mechanism of the central stalk subunits to proton translocation. Subunits alpha and beta form the catalytic core in F(1). Rotation of the central stalk against the surrounding alpha(3)beta(3) subunits leads to hydrolysis of ATP in three separate catalytic sites on the beta subunits. Subunit alpha does not bear the catalytic high-affinity ATP-binding sites. In Phaseolus vulgaris (Kidney bean), this protein is ATP synthase subunit alpha, mitochondrial (ATPA).